Here is a 432-residue protein sequence, read N- to C-terminus: Ribosomal protein uS12 methylthiotransferase RimO (432 aa).

The 114-residue stretch at 2–115 (IRVAVITLGC…LPEIINRVLK (114 aa)) folds into the MTTase N-terminal domain. [4Fe-4S] cluster contacts are provided by Cys11, Cys47, Cys78, Cys151, Cys155, and Cys158. Residues 137 to 367 (EDGKPFAYLK…MLHQQSITRA (231 aa)) enclose the Radical SAM core domain.

It belongs to the methylthiotransferase family. RimO subfamily. [4Fe-4S] cluster serves as cofactor.

Its subcellular location is the cytoplasm. The catalysed reaction is L-aspartate(89)-[ribosomal protein uS12]-hydrogen + (sulfur carrier)-SH + AH2 + 2 S-adenosyl-L-methionine = 3-methylsulfanyl-L-aspartate(89)-[ribosomal protein uS12]-hydrogen + (sulfur carrier)-H + 5'-deoxyadenosine + L-methionine + A + S-adenosyl-L-homocysteine + 2 H(+). In terms of biological role, catalyzes the methylthiolation of an aspartic acid residue of ribosomal protein uS12. The protein is Ribosomal protein uS12 methylthiotransferase RimO of Moorella thermoacetica (strain ATCC 39073 / JCM 9320).